The sequence spans 72 residues: Bowman-Birk type proteinase inhibitor (72 aa).

7 cysteine pairs are disulfide-bonded: Cys8-Cys61, Cys9-Cys24, Cys12-Cys57, Cys14-Cys22, Cys31-Cys38, Cys35-Cys50, and Cys40-Cys48.

Belongs to the Bowman-Birk serine protease inhibitor family.

This inhibitor has two domains, each with separate antiprotease activity. 1 mole of inhibitor inhibits either 1 mole of trypsin or 2 moles of chymotrypsin, stoichiometrically. The polypeptide is Bowman-Birk type proteinase inhibitor (Vicia sativa subsp. nigra (Common vetch)).